Here is a 460-residue protein sequence, read N- to C-terminus: Ribosomal protein uS12 methylthiotransferase RimO (460 aa).

The region spanning 9 to 119 is the MTTase N-terminal domain; it reads PKVGFVSLGC…VMEAVHAALP (111 aa). Positions 18, 54, 83, 150, 154, and 157 each coordinate [4Fe-4S] cluster. One can recognise a Radical SAM core domain in the interval 136–374; sequence LTPRHYAYLK…AKQAEISALR (239 aa). The 69-residue stretch at 376–444 folds into the TRAM domain; that stretch reads EAKIGSVQQC…EHDLFGDALP (69 aa).

The protein belongs to the methylthiotransferase family. RimO subfamily. [4Fe-4S] cluster serves as cofactor.

Its subcellular location is the cytoplasm. It catalyses the reaction L-aspartate(89)-[ribosomal protein uS12]-hydrogen + (sulfur carrier)-SH + AH2 + 2 S-adenosyl-L-methionine = 3-methylsulfanyl-L-aspartate(89)-[ribosomal protein uS12]-hydrogen + (sulfur carrier)-H + 5'-deoxyadenosine + L-methionine + A + S-adenosyl-L-homocysteine + 2 H(+). In terms of biological role, catalyzes the methylthiolation of an aspartic acid residue of ribosomal protein uS12. This chain is Ribosomal protein uS12 methylthiotransferase RimO, found in Xanthomonas oryzae pv. oryzae (strain PXO99A).